Reading from the N-terminus, the 276-residue chain is NADPH-dependent 7-cyano-7-deazaguanine reductase (276 aa).

I83 to S85 lines the substrate pocket. S85–K86 lines the NADPH pocket. The active-site Thioimide intermediate is C184. The active-site Proton donor is D191. Residue H223–E224 coordinates substrate. R252 to G253 contributes to the NADPH binding site.

It belongs to the GTP cyclohydrolase I family. QueF type 2 subfamily. As to quaternary structure, homodimer.

Its subcellular location is the cytoplasm. The catalysed reaction is 7-aminomethyl-7-carbaguanine + 2 NADP(+) = 7-cyano-7-deazaguanine + 2 NADPH + 3 H(+). It functions in the pathway tRNA modification; tRNA-queuosine biosynthesis. In terms of biological role, catalyzes the NADPH-dependent reduction of 7-cyano-7-deazaguanine (preQ0) to 7-aminomethyl-7-deazaguanine (preQ1). This is NADPH-dependent 7-cyano-7-deazaguanine reductase from Desulfotalea psychrophila (strain LSv54 / DSM 12343).